A 149-amino-acid polypeptide reads, in one-letter code: MLLPVVARAAVPAIESAIAATPGLVSRIAAAIGSKVSPSAILAAVKSNPVVAGLTLAQIGSTGYDAYQQLLENHPEVAEMLKDLSFKADEIQPDFIGNLGQYREELELVEDAARFVGGMSNLIRLRQALELDIKYYGLKMQLNDMGYRS.

In terms of assembly, homotrimer.

Its subcellular location is the virion. Functionally, assembles to form an icosahedral capsid with a T=13 symmetry. Drives the penetration of the inner capsid (core) into the cytoplasm. This is Major outer capsid protein (P8) from Pseudomonas phage phi6 (Bacteriophage phi-6).